The primary structure comprises 296 residues: Light-independent protochlorophyllide reductase iron-sulfur ATP-binding protein (296 aa).

ATP-binding positions include 10-15 (GIGKST) and lysine 39. Serine 14 contributes to the Mg(2+) binding site. [4Fe-4S] cluster contacts are provided by cysteine 95 and cysteine 129. 180–181 (NR) serves as a coordination point for ATP.

Belongs to the NifH/BchL/ChlL family. Homodimer. Protochlorophyllide reductase is composed of three subunits; ChlL, ChlN and ChlB. Requires [4Fe-4S] cluster as cofactor.

The protein resides in the plastid. Its subcellular location is the chloroplast. It catalyses the reaction chlorophyllide a + oxidized 2[4Fe-4S]-[ferredoxin] + 2 ADP + 2 phosphate = protochlorophyllide a + reduced 2[4Fe-4S]-[ferredoxin] + 2 ATP + 2 H2O. It functions in the pathway porphyrin-containing compound metabolism; chlorophyll biosynthesis (light-independent). Component of the dark-operative protochlorophyllide reductase (DPOR) that uses Mg-ATP and reduced ferredoxin to reduce ring D of protochlorophyllide (Pchlide) to form chlorophyllide a (Chlide). This reaction is light-independent. The L component serves as a unique electron donor to the NB-component of the complex, and binds Mg-ATP. This chain is Light-independent protochlorophyllide reductase iron-sulfur ATP-binding protein, found in Chlorokybus atmophyticus (Soil alga).